A 132-amino-acid chain; its full sequence is Nickel-responsive regulator (132 aa).

Ni(2+) contacts are provided by H76, H87, H89, and C95.

It belongs to the transcriptional regulatory CopG/NikR family. As to quaternary structure, homotetramer. Requires Ni(2+) as cofactor.

Transcriptional repressor of the nikABCDE operon. Is active in the presence of excessive concentrations of intracellular nickel. This Klebsiella pneumoniae subsp. pneumoniae (strain ATCC 700721 / MGH 78578) protein is Nickel-responsive regulator.